A 197-amino-acid chain; its full sequence is Imidazoleglycerol-phosphate dehydratase (197 aa).

Belongs to the imidazoleglycerol-phosphate dehydratase family.

The protein localises to the cytoplasm. The enzyme catalyses D-erythro-1-(imidazol-4-yl)glycerol 3-phosphate = 3-(imidazol-4-yl)-2-oxopropyl phosphate + H2O. Its pathway is amino-acid biosynthesis; L-histidine biosynthesis; L-histidine from 5-phospho-alpha-D-ribose 1-diphosphate: step 6/9. This is Imidazoleglycerol-phosphate dehydratase from Pseudomonas putida (strain GB-1).